A 287-amino-acid polypeptide reads, in one-letter code: Polyamine aminopropyltransferase (287 aa).

The region spanning 5–238 (EIWYETLHAN…GIMTFAWASQ (234 aa)) is the PABS domain. Residue Q33 participates in S-methyl-5'-thioadenosine binding. Residues H64 and D88 each coordinate spermidine. S-methyl-5'-thioadenosine-binding positions include E108 and 140–141 (DG). Residue D158 is the Proton acceptor of the active site. 158 to 161 (DCTD) lines the spermidine pocket. Residue P165 coordinates S-methyl-5'-thioadenosine.

Belongs to the spermidine/spermine synthase family. Homodimer or homotetramer.

The protein resides in the cytoplasm. It catalyses the reaction S-adenosyl 3-(methylsulfanyl)propylamine + putrescine = S-methyl-5'-thioadenosine + spermidine + H(+). It participates in amine and polyamine biosynthesis; spermidine biosynthesis; spermidine from putrescine: step 1/1. Its function is as follows. Catalyzes the irreversible transfer of a propylamine group from the amino donor S-adenosylmethioninamine (decarboxy-AdoMet) to putrescine (1,4-diaminobutane) to yield spermidine. This Serratia proteamaculans (strain 568) protein is Polyamine aminopropyltransferase.